The sequence spans 320 residues: Malate dehydrogenase (320 aa).

Residues 10–15 (GAGQIG) and Asp34 each bind NAD(+). The substrate site is built by Arg83 and Arg89. NAD(+)-binding positions include Asn96 and 119-121 (ITN). Residues Asn121 and Arg152 each coordinate substrate. His176 serves as the catalytic Proton acceptor.

The protein belongs to the LDH/MDH superfamily. MDH type 3 family.

It catalyses the reaction (S)-malate + NAD(+) = oxaloacetate + NADH + H(+). Catalyzes the reversible oxidation of malate to oxaloacetate. This chain is Malate dehydrogenase, found in Methylobacterium nodulans (strain LMG 21967 / CNCM I-2342 / ORS 2060).